A 145-amino-acid chain; its full sequence is Cytochrome b (145 aa).

The helical transmembrane segment at 38 to 58 (FFALHFLLPFVLAALALMHLI) threads the bilayer. Positions 42 and 56 each coordinate heme b. Position 61 (His-61) interacts with a ubiquinone. The helical transmembrane segment at 85–105 (FIFKDLVTIFIFFIVLSIFVF) threads the bilayer.

It belongs to the cytochrome b family. Fungal cytochrome b-c1 complex contains 10 subunits; 3 respiratory subunits, 2 core proteins and 5 low-molecular weight proteins. Cytochrome b-c1 complex is a homodimer. The cofactor is heme b.

Its subcellular location is the mitochondrion inner membrane. Component of the ubiquinol-cytochrome c reductase complex (complex III or cytochrome b-c1 complex) that is part of the mitochondrial respiratory chain. The b-c1 complex mediates electron transfer from ubiquinol to cytochrome c. Contributes to the generation of a proton gradient across the mitochondrial membrane that is then used for ATP synthesis. The polypeptide is Cytochrome b (cob) (Aspergillus flavus).